The following is an 89-amino-acid chain: UPF0237 protein Cgl1544/cg1742 (89 aa).

The ACT domain occupies 4 to 82 (IMTVTGQDHT…LVIRIQSEAL (79 aa)).

This sequence belongs to the UPF0237 family.

In Corynebacterium glutamicum (strain ATCC 13032 / DSM 20300 / JCM 1318 / BCRC 11384 / CCUG 27702 / LMG 3730 / NBRC 12168 / NCIMB 10025 / NRRL B-2784 / 534), this protein is UPF0237 protein Cgl1544/cg1742.